The sequence spans 523 residues: Tubulin-specific chaperone E (523 aa).

Positions 31–75 (GEVSGHMGSWLGIEWDDGLRGKHNGIVDGKRYFQTQTPTGGSFIR) constitute a CAP-Gly domain. 7 LRR repeats span residues 155–180 (LTHL…IAQQ), 181–204 (LPSL…QITE), 209–232 (FRQL…MHTA), 235–258 (WPNI…DRTK), 260–284 (FKQL…KLGN), 285–310 (LTTL…DSQE), and 315–337 (FVSL…AFNE).

The protein belongs to the TBCE family.

It localises to the cytoplasm. Its function is as follows. Tubulin-folding protein which is required for the development of the neuronal microtubule network. Essential for the development and function of neuromuscular synapses. Likely to promote microtubule formation by acting in the negative regulation of the microtubule-severing protein spas. The protein is Tubulin-specific chaperone E of Drosophila melanogaster (Fruit fly).